The primary structure comprises 139 residues: Histone H3 (139 aa).

The tract at residues 1-48 (MARTKSTVIARKVTGGKAPRKQIGSKAARKSAAPSNTSGGVKKPHRYK) is disordered. Lys5 is modified (N6,N6,N6-trimethyllysine; alternate). Lys5 is modified (N6,N6-dimethyllysine; alternate). 2 positions are modified to N6-methyllysine; alternate: Lys5 and Lys12. N6-acetyllysine; alternate is present on residues Lys12, Lys17, Lys21, Lys26, Lys30, and Lys42. Lys17 is subject to N6,N6-dimethyllysine; alternate. N6-methyllysine; alternate occurs at positions 21, 26, 30, and 42. Lys30 and Lys42 each carry N6,N6,N6-trimethyllysine; alternate. An N6,N6-dimethyllysine; alternate mark is found at Lys30 and Lys42. An N6-acetyllysine mark is found at Lys62 and Lys70. N6,N6,N6-trimethyllysine; alternate is present on Lys85. An N6,N6-dimethyllysine; alternate modification is found at Lys85. Lys85 carries the N6-methyllysine; alternate modification.

Belongs to the histone H3 family. The nucleosome is a histone octamer containing two molecules each of H2A, H2B, H3 and H4 assembled in one H3-H4 heterotetramer and two H2A-H2B heterodimers. The octamer wraps approximately 147 bp of DNA. Mono-, di- and trimethylated by the COMPASS complex to form H3K4me1/2/3. H3K4me activates gene expression by regulating transcription elongation and plays a role in telomere length maintenance. H3K4me enrichment correlates with transcription levels, and occurs in a 5' to 3' gradient with H3K4me3 enrichment at the 5'-end of genes, shifting to H3K4me2 and then H3K4me1. Methylated by SET2 to form H3K36me. H3K36me represses gene expression. Methylated by DOT1 to form H3K79me. H3K79me is required for association of SIR proteins with telomeric regions and for telomeric silencing. The COMPASS-mediated formation of H3K4me2/3 and the DOT1-mediated formation of H3K79me require H2BK123ub1. In terms of processing, acetylation of histone H3 leads to transcriptional activation. Acetylated by GCN5 to form H3K14ac. H3K14ac can also be formed by ESA1. H3K56ac formation occurs predominantly in newly synthesized H3 molecules during G1, S and G2/M of the cell cycle and may be involved in DNA repair.

It is found in the nucleus. Its subcellular location is the chromosome. Its function is as follows. Core component of nucleosome. Nucleosomes wrap and compact DNA into chromatin, limiting DNA accessibility to the cellular machineries which require DNA as a template. Histones thereby play a central role in transcription regulation, DNA repair, DNA replication and chromosomal stability. DNA accessibility is regulated via a complex set of post-translational modifications of histones, also called histone code, and nucleosome remodeling. In Yarrowia lipolytica (strain CLIB 122 / E 150) (Yeast), this protein is Histone H3 (HHT1).